A 418-amino-acid polypeptide reads, in one-letter code: Arginine deiminase (418 aa).

Cys-406 (amidino-cysteine intermediate) is an active-site residue.

The protein belongs to the arginine deiminase family.

It is found in the cytoplasm. The enzyme catalyses L-arginine + H2O = L-citrulline + NH4(+). The protein operates within amino-acid degradation; L-arginine degradation via ADI pathway; carbamoyl phosphate from L-arginine: step 1/2. The protein is Arginine deiminase of Lentilactobacillus hilgardii (Lactobacillus hilgardii).